The chain runs to 483 residues: BTB/POZ domain and ankyrin repeat-containing protein COCH (483 aa).

Residues 25–105 (SDVVFSVEGR…LYSGQVSIVP (81 aa)) form the BTB domain. The C2HC NPR-type zinc finger occupies 111–125 (RPNCGDRGCWHTHCT). Zn(2+) contacts are provided by cysteine 114, cysteine 119, histidine 121, and cysteine 124. ANK repeat units follow at residues 249 to 278 (QKIRRMRRALDSSDVELVKLMVMGEGLNLD), 279 to 308 (EALALPYAVESCSREVVKALLELGAADVNF), 313 to 342 (TGKTPLHIAAEMVSPDMVAVLLDHHADPNV), and 346 to 380 (DGVTPLDILRTLTSDFLFKGAVPGLTHIEPNKLRL). 2 disordered regions span residues 395–435 (EEGN…NSNM) and 450–483 (MSTSRLDSGDDDHNSNQREAMNPSMYHHHHSHDY). Residues 398–414 (NNNNNANNNNTGSSATN) show a composition bias toward low complexity. Residues 456-465 (DSGDDDHNSN) are compositionally biased toward basic and acidic residues.

The protein belongs to the plant 'ANKYRIN-BTB/POZ' family. 'NOOT-BOP-COCH-like' (NBCL) subfamily. In terms of assembly, homodimer.

It is found in the nucleus. The protein resides in the cytoplasm. The protein localises to the cell membrane. The protein operates within protein modification; protein ubiquitination. Its function is as follows. May act as a substrate-specific adapter of an E3 ubiquitin-protein ligase complex (CUL3-RBX1-BTB) which mediates the ubiquitination and subsequent proteasomal degradation of target proteins. Transcriptional co-regulator involved in the promotion of leaf and floral meristem fate and determinacy. Promotes normal stipule growth and development. Required for the abscission of senescent organs, probably by regulating the cell wall disorganization in abscission zones (AZs, e.g. pulvini at the base of leaves). Down-regulates UNI expression in primordia of leaves and secondary inflorescences, and thereby controls their sizes and/or structures. Involved in the coordination of the symbiotic nodule developmental program. Promotes the formation of root nodules by interacting directly with APP1 to modulate the expression of the nuclear transcription factor Y subunit (NF-YA1), a key nodulin. Necessary for the robust maintenance of nodule identity throughout the nodule developmental program. This Pisum sativum (Garden pea) protein is BTB/POZ domain and ankyrin repeat-containing protein COCH.